Consider the following 263-residue polypeptide: Nicotinamide riboside transporter PnuC (263 aa).

At methionine 1 to tryptophan 40 the chain is on the cytoplasmic side. Residues threonine 41–phenylalanine 61 traverse the membrane as a helical segment. A topological domain (periplasmic) is located at residue asparagine 62. A helical membrane pass occupies residues proline 63–glycine 83. Topologically, residues lysine 84–lysine 86 are cytoplasmic. The helical transmembrane segment at isoleucine 87–phenylalanine 107 threads the bilayer. Residues lysine 108 to leucine 109 lie on the Periplasmic side of the membrane. A helical membrane pass occupies residues tyrosine 110–tryptophan 131. Residue glutamine 124 participates in beta-nicotinamide D-riboside binding. Residues arginine 132–glutamine 155 lie on the Cytoplasmic side of the membrane. A helical membrane pass occupies residues tryptophan 156–leucine 177. Residues glycine 178–alanine 180 lie on the Periplasmic side of the membrane. Residues leucine 181 to leucine 201 form a helical membrane-spanning segment. Position 196 (glutamine 196) interacts with beta-nicotinamide D-riboside. The Cytoplasmic segment spans residues arginine 202 to glutamate 205. Residues glutamine 206–phenylalanine 226 form a helical membrane-spanning segment. 2 residues coordinate beta-nicotinamide D-riboside: tryptophan 210 and asparagine 214. Residues lysine 227–serine 232 lie on the Periplasmic side of the membrane. A helical membrane pass occupies residues leucine 233–tryptophan 253. Tyrosine 242 is a binding site for beta-nicotinamide D-riboside. At threonine 254 to glutamine 263 the chain is on the cytoplasmic side.

Belongs to the nicotinamide ribonucleoside (NR) uptake permease (TC 4.B.1) family. As to quaternary structure, homotrimer.

Its subcellular location is the cell inner membrane. In terms of biological role, required for nicotinamide riboside transport across the inner membrane. The chain is Nicotinamide riboside transporter PnuC from Neisseria mucosa (strain ATCC 25996 / DSM 4631 / NCTC 10774 / M26).